The chain runs to 328 residues: 2,4-dinitroanisole O-demethylase subunit alpha (328 aa).

Residues M1–S9 constitute a propeptide that is removed on maturation. 6 residues coordinate Zn(2+): H101, H103, D105, H168, H225, and C247.

The protein belongs to the metallo-beta-lactamase superfamily. Part of the complex DnhAB composed of the 2,4-dinitroanisole O-demethylase alpha (DnhA) and beta (DnhB) subunits. Zn(2+) is required as a cofactor.

The catalysed reaction is 2,4-dinitroanisole + H2O = 2,4-dinitrophenol + methanol + H(+). Its function is as follows. Involved in the degradation of 2,4-dinitroanisole (DNAN), an insensitive munition ingredient used in explosive formulations as a replacement for 2,4,6-trinitrotoluene (TNT). Catalyzes the removal of the methyl group from 2,4-dinitroanisole (DNAN) to yield 2,4-dinitrophenol (2,4-DNP) and methanol. This chain is 2,4-dinitroanisole O-demethylase subunit alpha, found in Nocardioides sp. (strain JS1661).